Reading from the N-terminus, the 308-residue chain is Shikimate kinase 1, chloroplastic (308 aa).

The N-terminal 62 residues, 1-62 (MEAGVGLALQ…RGSKPVAPLR (62 aa)), are a transit peptide targeting the chloroplast. ATP is bound at residue 103 to 110 (GMMGSGKS). S110 serves as a coordination point for Mg(2+). Residues D128, R153, and G175 each contribute to the substrate site. Position 214 (R214) interacts with ATP.

Belongs to the shikimate kinase family. Requires Mg(2+) as cofactor. In terms of tissue distribution, expressed in panicles.

Its subcellular location is the plastid. The protein resides in the chloroplast. It carries out the reaction shikimate + ATP = 3-phosphoshikimate + ADP + H(+). It functions in the pathway metabolic intermediate biosynthesis; chorismate biosynthesis; chorismate from D-erythrose 4-phosphate and phosphoenolpyruvate: step 5/7. Its function is as follows. Catalyzes the specific phosphorylation of the 3-hydroxyl group of shikimic acid using ATP as a cosubstrate. The chain is Shikimate kinase 1, chloroplastic (SK1) from Oryza sativa subsp. japonica (Rice).